We begin with the raw amino-acid sequence, 167 residues long: NAD(P)H-quinone oxidoreductase subunit I, chloroplastic (167 aa).

2 consecutive 4Fe-4S ferredoxin-type domains span residues 55–84 and 95–124; these read GRIHFEFDKCIACEVCVRVCPIDLPVVDWK and LNYSIDFGICIFCGNCVEYCPTNCLSMTEE. [4Fe-4S] cluster-binding residues include cysteine 64, cysteine 67, cysteine 70, cysteine 74, cysteine 104, cysteine 107, cysteine 110, and cysteine 114.

Belongs to the complex I 23 kDa subunit family. NDH is composed of at least 16 different subunits, 5 of which are encoded in the nucleus. Requires [4Fe-4S] cluster as cofactor.

The protein localises to the plastid. It localises to the chloroplast thylakoid membrane. The catalysed reaction is a plastoquinone + NADH + (n+1) H(+)(in) = a plastoquinol + NAD(+) + n H(+)(out). It carries out the reaction a plastoquinone + NADPH + (n+1) H(+)(in) = a plastoquinol + NADP(+) + n H(+)(out). Its function is as follows. NDH shuttles electrons from NAD(P)H:plastoquinone, via FMN and iron-sulfur (Fe-S) centers, to quinones in the photosynthetic chain and possibly in a chloroplast respiratory chain. The immediate electron acceptor for the enzyme in this species is believed to be plastoquinone. Couples the redox reaction to proton translocation, and thus conserves the redox energy in a proton gradient. The protein is NAD(P)H-quinone oxidoreductase subunit I, chloroplastic of Barbarea verna (Land cress).